Here is a 487-residue protein sequence, read N- to C-terminus: MAKIEKKQAVKNNQVLSLAEKIKRKALEKQQQAHANEPSPSDEDSAQSNSKDSNSNEQPEESEEIFESFTELDLVPELIEACKNLNYNKPTPIQSKAIPPALKGSDIIGLAQTGSGKTAAFAIPILNQLWHDQQPYYACILAPTRELAQQIKETFDSLGSLMGVRSTCIVGGMSMMDQARDLMRKPHIIIATPGRLMDHLENTKGFNLRKLKYLVMDEADRLLDMEFGPVLDRILNIIPTQGRTTYLFSATMTSKIDKLQRASLTNPVKCAVSNKYQTVDTLVQTLMVVPGGLKNTFLIYLLNEFIGKSTIVFTRTKANAERISNLCNLLEFSATALHGDLNQNQRTGALDLFKAGKRSILVATDVAARGLDIPSVDIVINYDIPVDSKSYIHRVGRTARAGRSGKSISLVSQYDLELILRIEDVLGKKLPKENVDKDAILALRDSVDKANGEVVMELNRRNKEKQARGKGRRGRMATRDNMDREER.

The segment at 22–67 (IKRKALEKQQQAHANEPSPSDEDSAQSNSKDSNSNEQPEESEEIFE) is disordered. The Q motif signature appears at 67–95 (ESFTELDLVPELIEACKNLNYNKPTPIQS). Residues 98–270 (IPPALKGSDI…RASLTNPVKC (173 aa)) enclose the Helicase ATP-binding domain. 111 to 118 (AQTGSGKT) is a binding site for ATP. The short motif at 217–220 (DEAD) is the DEAD box element. The region spanning 298–442 (LIYLLNEFIG…ENVDKDAILA (145 aa)) is the Helicase C-terminal domain. The tract at residues 459–487 (NRRNKEKQARGKGRRGRMATRDNMDREER) is disordered. The span at 477-487 (ATRDNMDREER) shows a compositional bias: basic and acidic residues.

It belongs to the DEAD box helicase family. DDX47/RRP3 subfamily. Interacts with the SSU processome.

Its subcellular location is the nucleus. It carries out the reaction ATP + H2O = ADP + phosphate + H(+). Its function is as follows. ATP-dependent rRNA helicase required for pre-ribosomal RNA processing. Involved in the maturation of the 35S-pre-rRNA and to its cleavage to mature 18S rRNA. The chain is ATP-dependent rRNA helicase RRP3 from Kluyveromyces lactis (strain ATCC 8585 / CBS 2359 / DSM 70799 / NBRC 1267 / NRRL Y-1140 / WM37) (Yeast).